The chain runs to 199 residues: Proteasome subunit beta type-2 (199 aa).

The protein belongs to the peptidase T1B family. In terms of assembly, the 26S proteasome consists of a 20S proteasome core and two 19S regulatory subunits. The 20S proteasome core is composed of 28 subunits that are arranged in four stacked rings, resulting in a barrel-shaped structure. The two end rings are each formed by seven alpha subunits, and the two central rings are each formed by seven beta subunits. The catalytic chamber with the active sites is on the inside of the barrel.

It is found in the cytoplasm. The protein resides in the nucleus. Non-catalytic component of the proteasome, a multicatalytic proteinase complex which is characterized by its ability to cleave peptides with Arg, Phe, Tyr, Leu, and Glu adjacent to the leaving group at neutral or slightly basic pH. The proteasome has an ATP-dependent proteolytic activity. The sequence is that of Proteasome subunit beta type-2 (pbs-4) from Caenorhabditis elegans.